A 310-amino-acid polypeptide reads, in one-letter code: tRNA-cytidine(32) 2-sulfurtransferase (310 aa).

A PP-loop motif motif is present at residues 47 to 52; the sequence is SGGKDS. The [4Fe-4S] cluster site is built by C122, C125, and C213.

It belongs to the TtcA family. In terms of assembly, homodimer. The cofactor is Mg(2+). [4Fe-4S] cluster is required as a cofactor.

Its subcellular location is the cytoplasm. It catalyses the reaction cytidine(32) in tRNA + S-sulfanyl-L-cysteinyl-[cysteine desulfurase] + AH2 + ATP = 2-thiocytidine(32) in tRNA + L-cysteinyl-[cysteine desulfurase] + A + AMP + diphosphate + H(+). Its pathway is tRNA modification. In terms of biological role, catalyzes the ATP-dependent 2-thiolation of cytidine in position 32 of tRNA, to form 2-thiocytidine (s(2)C32). The sulfur atoms are provided by the cysteine/cysteine desulfurase (IscS) system. This is tRNA-cytidine(32) 2-sulfurtransferase from Haemophilus influenzae (strain 86-028NP).